The sequence spans 225 residues: E3 ubiquitin-protein ligase ATL76 (225 aa).

A helical membrane pass occupies residues leucine 59–isoleucine 79. The segment at cysteine 135–arginine 177 adopts an RING-type; atypical zinc-finger fold.

This sequence belongs to the RING-type zinc finger family. ATL subfamily.

The protein localises to the membrane. The enzyme catalyses S-ubiquitinyl-[E2 ubiquitin-conjugating enzyme]-L-cysteine + [acceptor protein]-L-lysine = [E2 ubiquitin-conjugating enzyme]-L-cysteine + N(6)-ubiquitinyl-[acceptor protein]-L-lysine.. The protein operates within protein modification; protein ubiquitination. In terms of biological role, E3 ubiquitin-protein ligase able to catalyze polyubiquitination with ubiquitin-conjugating enzyme E2 UBC8 in vitro. This chain is E3 ubiquitin-protein ligase ATL76 (ATL76), found in Arabidopsis thaliana (Mouse-ear cress).